The primary structure comprises 594 residues: MSYEKKSVEGAYIDDSTTFEAFHLDSRLLQAIKNIGFQYPTLIQSHAIPLALQQKRDIIAKAATGSGKTLAYLIPVIETILEYKKTIDNGEENGTLGIILVPTRELAQQVYNVLEKLVLYCSKDIRTLNISSDMSDSVLSTLLMDQPEIIVGTPGKLLDLLQTKINSISLNELKFLVVDEVDLVLTFGYQDDLNKIGEYLPLKKNLQTFLMSATLNDDIQALKQKFCRSPAILKFNDEEINKNQNKLLQYYVKVSEFDKFLLCYVIFKLNLIKGKTLIFVNNIDRGYRLKLVMEQFGIKSCILNSELPVNSRQHIVDQFNKNVYQLLIATDDTEYIKEEDDEIEEGHNTENQEEKSLEGEPENDKKPSKKKKVQVKKDKEYGVSRGVDFKNVACVLNFDLPTTAKSYVHRVGRTARGGKTGTAISFVVPLKEFGKHKPSMLQTAKKDERILSRIIKQQSKLGLELQPYKFDQKQVEAFRYRMEDGFRAVTQVAIREARVKELKQELLASEKLKRHFEENPKELQSLRHDKELHPARVQQHLKRVPDYLLPESARGNGTKVKFVPFHNAKKRHSHKKGRVSKPKNGKVDPLKNFK.

Positions 17-45 (TTFEAFHLDSRLLQAIKNIGFQYPTLIQS) match the Q motif motif. A Helicase ATP-binding domain is found at 49–233 (PLALQQKRDI…QKFCRSPAIL (185 aa)). Residue 62 to 69 (AATGSGKT) participates in ATP binding. The DEAD box motif lies at 179-182 (DEVD). The region spanning 246 to 476 (KLLQYYVKVS…PYKFDQKQVE (231 aa)) is the Helicase C-terminal domain. Disordered stretches follow at residues 339–377 (EDDE…QVKK) and 558–594 (TKVK…KNFK). Positions 345 to 366 (EGHNTENQEEKSLEGEPENDKK) are enriched in basic and acidic residues. The span at 567–584 (NAKKRHSHKKGRVSKPKN) shows a compositional bias: basic residues. The span at 585–594 (GKVDPLKNFK) shows a compositional bias: basic and acidic residues.

The protein belongs to the DEAD box helicase family. DDX56/DBP9 subfamily. As to quaternary structure, interacts with DBP6.

The protein resides in the nucleus. The protein localises to the nucleolus. The catalysed reaction is ATP + H2O = ADP + phosphate + H(+). In terms of biological role, ATP-binding RNA helicase involved in the biogenesis of 60S ribosomal subunits and is required for the normal formation of 25S and 5.8S rRNAs. This chain is ATP-dependent RNA helicase DBP9 (DBP9), found in Saccharomyces cerevisiae (strain YJM789) (Baker's yeast).